Here is an 86-residue protein sequence, read N- to C-terminus: Large ribosomal subunit protein bL31B (86 aa).

This sequence belongs to the bacterial ribosomal protein bL31 family. Type B subfamily. As to quaternary structure, part of the 50S ribosomal subunit.

This Streptococcus pyogenes serotype M1 protein is Large ribosomal subunit protein bL31B.